Here is a 259-residue protein sequence, read N- to C-terminus: Thiazole synthase (259 aa).

Lys-100 (schiff-base intermediate with DXP) is an active-site residue. 1-deoxy-D-xylulose 5-phosphate-binding positions include Gly-161, Ala-187–Gly-188, and Ala-209–Ser-210.

This sequence belongs to the ThiG family. In terms of assembly, homotetramer. Forms heterodimers with either ThiH or ThiS.

The protein localises to the cytoplasm. The enzyme catalyses [ThiS sulfur-carrier protein]-C-terminal-Gly-aminoethanethioate + 2-iminoacetate + 1-deoxy-D-xylulose 5-phosphate = [ThiS sulfur-carrier protein]-C-terminal Gly-Gly + 2-[(2R,5Z)-2-carboxy-4-methylthiazol-5(2H)-ylidene]ethyl phosphate + 2 H2O + H(+). The protein operates within cofactor biosynthesis; thiamine diphosphate biosynthesis. Catalyzes the rearrangement of 1-deoxy-D-xylulose 5-phosphate (DXP) to produce the thiazole phosphate moiety of thiamine. Sulfur is provided by the thiocarboxylate moiety of the carrier protein ThiS. In vitro, sulfur can be provided by H(2)S. In Salinispora arenicola (strain CNS-205), this protein is Thiazole synthase.